We begin with the raw amino-acid sequence, 265 residues long: Taurine import ATP-binding protein TauB (265 aa).

Residues 7 to 236 (QNLNMIFKTP…MGIDGDLREI (230 aa)) enclose the ABC transporter domain. ATP is bound at residue 41–48 (GPSGCGKT).

This sequence belongs to the ABC transporter superfamily. Taurine importer (TC 3.A.1.17.1) family. As to quaternary structure, the complex is composed of two ATP-binding proteins (TauB), two transmembrane proteins (TauC) and a solute-binding protein (TauA).

It localises to the cell inner membrane. It carries out the reaction taurine(out) + ATP + H2O = taurine(in) + ADP + phosphate + H(+). In terms of biological role, part of the ABC transporter complex TauABC involved in taurine import. Responsible for energy coupling to the transport system. The sequence is that of Taurine import ATP-binding protein TauB from Pelagibacter ubique (strain HTCC1062).